The primary structure comprises 466 residues: Asparagine--tRNA ligase (466 aa).

Belongs to the class-II aminoacyl-tRNA synthetase family. As to quaternary structure, homodimer.

It localises to the cytoplasm. It carries out the reaction tRNA(Asn) + L-asparagine + ATP = L-asparaginyl-tRNA(Asn) + AMP + diphosphate + H(+). The sequence is that of Asparagine--tRNA ligase from Yersinia enterocolitica serotype O:8 / biotype 1B (strain NCTC 13174 / 8081).